A 141-amino-acid chain; its full sequence is VLSDEDKTNVKTFWGKIGTHTGEYGGEALERMFLSFPTTKTYFPHFDLSHGSGQIKAHGKKVADALTRAVGHLEDLPGTLSELSDLHAHRLRVDPVNFKLLSHCLLVTLSSHLREDFTPSVHASLDKFLSSVSTVLTSKYR.

The Globin domain occupies Val1 to Arg141. The residue at position 3 (Ser3) is a Phosphoserine. Lys7 bears the N6-succinyllysine mark. Residue Thr8 is modified to Phosphothreonine. Lys11 carries the post-translational modification N6-succinyllysine. An N6-acetyllysine; alternate modification is found at Lys16. Residue Lys16 is modified to N6-succinyllysine; alternate. Tyr24 bears the Phosphotyrosine mark. A Phosphoserine modification is found at Ser35. At Lys40 the chain carries N6-succinyllysine. Ser49 carries the post-translational modification Phosphoserine. His58 contributes to the O2 binding site. His87 is a binding site for heme b. At Ser102 the chain carries Phosphoserine. Residue Thr108 is modified to Phosphothreonine. Phosphoserine is present on residues Ser124 and Ser131. Thr134 and Thr137 each carry phosphothreonine. The residue at position 138 (Ser138) is a Phosphoserine.

It belongs to the globin family. In terms of assembly, heterotetramer of two alpha chains and two beta chains. Red blood cells.

Involved in oxygen transport from the lung to the various peripheral tissues. In terms of biological role, hemopressin acts as an antagonist peptide of the cannabinoid receptor CNR1. Hemopressin-binding efficiently blocks cannabinoid receptor CNR1 and subsequent signaling. The sequence is that of Hemoglobin subunit alpha (HBA) from Trichechus inunguis (Amazon manatee).